An 83-amino-acid polypeptide reads, in one-letter code: Hainantoxin-III 11 (83 aa).

An N-terminal signal peptide occupies residues 1–21 (MKASMFLALAGLVLLFVVGYA). Positions 22-48 (SESEEKDFPRELLSKIFAVDDFKGEER) are excised as a propeptide. 3 disulfides stabilise this stretch: Cys50-Cys65, Cys57-Cys70, and Cys64-Cys77. Leu81 is subject to Leucine amide.

The protein belongs to the neurotoxin 10 (Hwtx-1) family. 15 (Hntx-3) subfamily. Monomer. Expressed by the venom gland.

The protein localises to the secreted. Its function is as follows. Selective antagonist of neuronal tetrodotoxin (TTX)-sensitive voltage-gated sodium channels (IC(50)=1270 nM on Nav1.1/SCN1A, 270 nM on Nav1.2/SCN2A, 491 nM on Nav1.3/SCN3A and 232 nM on Nav1.7/SCN9A). This toxin suppress Nav1.7 current amplitude without significantly altering the activation, inactivation, and repriming kinetics. Short extreme depolarizations partially activate the toxin-bound channel, indicating voltage-dependent inhibition of this toxin. This toxin increases the deactivation of the Nav1.7 current after extreme depolarizations. The toxin-Nav1.7 complex is gradually dissociated upon prolonged strong depolarizations in a voltage-dependent manner, and the unbound toxin rebinds to Nav1.7 after a long repolarization. Moreover, analysis of chimeric channels showed that the DIIS3-S4 linker is critical for toxin binding to Nav1.7. These data are consistent with this toxin interacting with Nav1.7 site 4 and trapping the domain II voltage sensor in the closed state. The chain is Hainantoxin-III 11 from Cyriopagopus hainanus (Chinese bird spider).